The chain runs to 145 residues: MAKKVTGQVELMIPAQQAAPSPPVGPALGQHGVNIMEFVKSFNAATANMKPGTIVPVVITIYSDRSFTFILKTPPASYLLKEAAGIKTGSGDPKRNKVGKITVNQLREIAEMKLKDLNTEDIEMAMRTIAGTARSMGIEIEGYKG.

This sequence belongs to the universal ribosomal protein uL11 family. Part of the ribosomal stalk of the 50S ribosomal subunit. Interacts with L10 and the large rRNA to form the base of the stalk. L10 forms an elongated spine to which L12 dimers bind in a sequential fashion forming a multimeric L10(L12)X complex. One or more lysine residues are methylated.

In terms of biological role, forms part of the ribosomal stalk which helps the ribosome interact with GTP-bound translation factors. The protein is Large ribosomal subunit protein uL11 of Sulfurihydrogenibium sp. (strain YO3AOP1).